A 149-amino-acid chain; its full sequence is Acyl carrier protein 1, chloroplastic (149 aa).

The N-terminal 59 residues, 1 to 59 (MAHCLAAVSSFSPSAVRRRLSSQVANVVSSRSSVSFHSRQMSFVSISSRPSSLRFKICC), are a transit peptide targeting the chloroplast. One can recognise a Carrier domain in the interval 69–144 (KETVDKVCMI…DAANLIEKLV (76 aa)). The residue at position 104 (S104) is an O-(pantetheine 4'-phosphoryl)serine.

The protein belongs to the acyl carrier protein (ACP) family. 4'-phosphopantetheine is transferred from CoA to a specific serine of apo-ACP by acpS. This modification is essential for activity because fatty acids are bound in thioester linkage to the sulfhydryl of the prosthetic group.

The protein resides in the plastid. It localises to the chloroplast. Its pathway is lipid metabolism; fatty acid biosynthesis. In terms of biological role, carrier of the growing fatty acid chain in fatty acid biosynthesis. The chain is Acyl carrier protein 1, chloroplastic (ACL1.1) from Hordeum vulgare (Barley).